Here is a 308-residue protein sequence, read N- to C-terminus: 1D-myo-inositol 2-acetamido-2-deoxy-alpha-D-glucopyranoside deacetylase (308 aa).

Positions 37, 40, and 171 each coordinate Zn(2+).

The protein belongs to the MshB deacetylase family. The cofactor is Zn(2+).

The enzyme catalyses 1D-myo-inositol 2-acetamido-2-deoxy-alpha-D-glucopyranoside + H2O = 1D-myo-inositol 2-amino-2-deoxy-alpha-D-glucopyranoside + acetate. Catalyzes the deacetylation of 1D-myo-inositol 2-acetamido-2-deoxy-alpha-D-glucopyranoside (GlcNAc-Ins) in the mycothiol biosynthesis pathway. This Mycobacterium sp. (strain KMS) protein is 1D-myo-inositol 2-acetamido-2-deoxy-alpha-D-glucopyranoside deacetylase.